The following is an 83-amino-acid chain: Small ribosomal subunit protein bS16 (83 aa).

The protein belongs to the bacterial ribosomal protein bS16 family.

The polypeptide is Small ribosomal subunit protein bS16 (Ectopseudomonas mendocina (strain ymp) (Pseudomonas mendocina)).